A 290-amino-acid chain; its full sequence is MPFDFRRFDIYRKVPKDLTQPTYTGAIISICCCLFILFLFLSELTGFITTEVVNELYVDDPDKDSGGKIDVSLNISLPNLHCELVGLDIQDEMGRHEVGHIDNSMKIPLNNGAGCRFEGQFSINKVPGNFHVSTHSATAQPQNPDMTHTIHKLSFGDTLQVQNVHGAFNALGGADRLTSNPLASHDYILKIVPTVYEDKSGKQRYSYQYTVANKEYVAYSHTGRIIPAIWFRYDLSPITVKYTERRQPLYRFITTICAIIGGTFTVAGILDSCIFTASEAWKKIQLGKIH.

The Cytoplasmic segment spans residues 1 to 26 (MPFDFRRFDIYRKVPKDLTQPTYTGA). Residues 27 to 47 (IISICCCLFILFLFLSELTGF) form a helical membrane-spanning segment. Topologically, residues 48–254 (ITTEVVNELY…RRQPLYRFIT (207 aa)) are lumenal. Asn74 is a glycosylation site (N-linked (GlcNAc...) asparagine). A helical membrane pass occupies residues 255 to 275 (TICAIIGGTFTVAGILDSCIF). Topologically, residues 276-290 (TASEAWKKIQLGKIH) are cytoplasmic.

Belongs to the ERGIC family. In terms of assembly, may form a heteromeric complex composed of ERGIC1, ERGIC2 and ERGIC3. Within the complex, the interaction with ERGIC3 is direct. Interacts with ERGIC3/ERV46. In terms of processing, N-glycosylated.

It is found in the endoplasmic reticulum membrane. The protein localises to the endoplasmic reticulum-Golgi intermediate compartment membrane. Its subcellular location is the golgi apparatus membrane. Its function is as follows. Possible role in transport between endoplasmic reticulum and Golgi. The sequence is that of Endoplasmic reticulum-Golgi intermediate compartment protein 1 (Ergic1) from Mus musculus (Mouse).